The primary structure comprises 694 residues: MATPLKLYRNIGIAAHVDAGKTTTTERVLYYTGMSHKIGEVHDGAATMDWMVQEQERGITITSAATTCYWSGMDKQFESHRINIIDTPGHVDFMIEVERSLRVLDGAVVVFDSVAGVEPQSETVWRQANKYGVPRIVFVNKMDRMGANFLRVVSQIKQRLGSTPVVLQLPIGAEEEFKGVIDLIKMKAIHWDEENKGMTFKYVDIPADLKATCEEYRAHIIEAAAEYSEELMEKYLEGEEFTEAEIKKALRHLTITNKVVPVFCGSAFKNKGVQAVLDGVIEYLPSPTDIPDIQGVDEHGDEIHRKTSYDEPFSALAFKIATDPFVGTLTYFRAYSGILKSGDTVYNSVKGKKERIGRLLQMHANSREEIKEVRAGDIAAAVGLKTVTTGDTLCDQDKVVILERMDFPDPVIAVAVEPKTKADQEKMGIALGKLAQEDPSFRVHTDEESGQTIIQGMGELHLEIIVDRMKREFNVEANVGKPQVAYRETLKQAVEQEGKFVRQSGGRGQYGHVWLKIEPQEPGKGYEFINAIVGGVIPKEYIPAVDKGIQEQMQNGVIAGYPVVDVKVTLFDGSFHEVDSSEMALKIAGSQCFKQGALKAKPVLLEPIMSVEVVTPEDYMGDVMGDLNRRRGLVQGMEDSPAGKIVRAEVPLAEMFGYSTDLRSATQGRATYTMEFCKYAEAPTNIAEAIIKKQ.

Positions 6–288 (KLYRNIGIAA…GVIEYLPSPT (283 aa)) constitute a tr-type G domain. GTP is bound by residues 15 to 22 (AHVDAGKT), 86 to 90 (DTPGH), and 140 to 143 (NKMD).

The protein belongs to the TRAFAC class translation factor GTPase superfamily. Classic translation factor GTPase family. EF-G/EF-2 subfamily.

It localises to the cytoplasm. Its function is as follows. Catalyzes the GTP-dependent ribosomal translocation step during translation elongation. During this step, the ribosome changes from the pre-translocational (PRE) to the post-translocational (POST) state as the newly formed A-site-bound peptidyl-tRNA and P-site-bound deacylated tRNA move to the P and E sites, respectively. Catalyzes the coordinated movement of the two tRNA molecules, the mRNA and conformational changes in the ribosome. This is Elongation factor G from Legionella pneumophila (strain Corby).